The chain runs to 388 residues: bZIP transcription factor 1-D (388 aa).

Disordered regions lie at residues 1–49 (MGSS…PIPP), 103–249 (FAPY…GPTT), 261–316 (TASS…RKQA), and 348–388 (ELLS…KDTN). 2 stretches are compositionally biased toward low complexity: residues 23–33 (PPATSSTATPT) and 117–129 (AAGTTTTAATAGG). Residues 169-179 (SGASANGTISQ) are compositionally biased toward polar residues. Residues 180–193 (SGESGSESSSEGSE) show a composition bias toward low complexity. A compositionally biased stretch (polar residues) spans 214–231 (RSSQNGVSPSPSQAQLKQ). Residues 293–356 (ELKRQKRKQS…DELLSKNSSL (64 aa)) form the bZIP domain. The segment at 295-314 (KRQKRKQSNRDSARRSRLRK) is basic motif. The segment covering 302–316 (SNRDSARRSRLRKQA) has biased composition (basic and acidic residues). Positions 321 to 356 (LAQRAEVLKQENASLKDEVSRIRKEYDELLSKNSSL) are leucine-zipper. 2 stretches are compositionally biased toward basic and acidic residues: residues 359–369 (NVGDKQHKTDE) and 375–388 (KLQHSGDDSQKDTN).

It belongs to the bZIP family. Highly expressed in roots and at lower levels in stems and leaves.

It localises to the nucleus. Functionally, probable transcription factor that may be involved in responses to fungal pathogen infection and abiotic stresses. The polypeptide is bZIP transcription factor 1-D (Triticum aestivum (Wheat)).